The following is a 352-amino-acid chain: Protein RecA (352 aa).

65-72 is a binding site for ATP; it reads GPESSGKT.

The protein belongs to the RecA family.

Its subcellular location is the cytoplasm. Its function is as follows. Can catalyze the hydrolysis of ATP in the presence of single-stranded DNA, the ATP-dependent uptake of single-stranded DNA by duplex DNA, and the ATP-dependent hybridization of homologous single-stranded DNAs. It interacts with LexA causing its activation and leading to its autocatalytic cleavage. This chain is Protein RecA, found in Pseudomonas fluorescens (strain Pf0-1).